Consider the following 159-residue polypeptide: Phosphopantetheine adenylyltransferase (159 aa).

Serine 8 is a substrate binding site. Residues 8 to 9 (SF) and histidine 16 contribute to the ATP site. Substrate contacts are provided by lysine 40, leucine 73, and lysine 87. ATP is bound by residues 88-90 (GLR), glutamate 98, and 122-128 (YGYVSST).

The protein belongs to the bacterial CoaD family. Homohexamer. Mg(2+) serves as cofactor.

The protein localises to the cytoplasm. The enzyme catalyses (R)-4'-phosphopantetheine + ATP + H(+) = 3'-dephospho-CoA + diphosphate. The protein operates within cofactor biosynthesis; coenzyme A biosynthesis; CoA from (R)-pantothenate: step 4/5. Its function is as follows. Reversibly transfers an adenylyl group from ATP to 4'-phosphopantetheine, yielding dephospho-CoA (dPCoA) and pyrophosphate. This is Phosphopantetheine adenylyltransferase from Corynebacterium efficiens (strain DSM 44549 / YS-314 / AJ 12310 / JCM 11189 / NBRC 100395).